Here is a 1214-residue protein sequence, read N- to C-terminus: Neuronal cell adhesion molecule (1214 aa).

The first 29 residues, 1 to 29 (MQLKTMPKKKPLSAGRAPLFLFLCQMISA), serve as a signal peptide directing secretion. The Extracellular segment spans residues 30-1077 (LDVPLDPKLL…ASRQVDIATQ (1048 aa)). Ig-like C2-type domains are found at residues 46-134 (PTIT…AAVS) and 141-235 (PSRS…QPIS). 2 cysteine pairs are disulfide-bonded: cysteine 68–cysteine 123 and cysteine 167–cysteine 218. An N-linked (GlcNAc...) asparagine glycan is attached at asparagine 83. N-linked (GlcNAc...) asparagine glycans are attached at residues asparagine 223, asparagine 245, asparagine 251, asparagine 276, asparagine 314, and asparagine 377. 4 consecutive Ig-like C2-type domains span residues 267-356 (PPTF…ISVT), 361-448 (PYWI…AFVN), 454-541 (PRIL…VHLE), and 545-626 (PTRF…DSVS). The cysteines at positions 292 and 340 are disulfide-linked. Cysteines 382 and 432 form a disulfide. Residues asparagine 433 and asparagine 507 are each glycosylated (N-linked (GlcNAc...) asparagine). 2 cysteine pairs are disulfide-bonded: cysteine 476/cysteine 525 and cysteine 567/cysteine 616. Asparagine 619, asparagine 716, asparagine 802, asparagine 858, asparagine 993, asparagine 1009, and asparagine 1019 each carry an N-linked (GlcNAc...) asparagine glycan. Fibronectin type-III domains lie at 649 to 744 (PPFD…TKAA), 746 to 843 (PDQN…SGED), 848 to 950 (APGN…TPEG), and 954 to 1051 (APSS…VDEG). The chain crosses the membrane as a helical span at residues 1078 to 1100 (GWFIGLMCAVALLILILLIVCFI). The Cytoplasmic portion of the chain corresponds to 1101–1214 (RRNKGGKYPV…SPVNAMNSFV (114 aa)). Residues 1109-1129 (PVKEKEDAHADPEIQPMKEDD) show a composition bias toward basic and acidic residues. A disordered region spans residues 1109 to 1214 (PVKEKEDAHA…SPVNAMNSFV (106 aa)). The residue at position 1131 (threonine 1131) is a Phosphothreonine. At tyrosine 1135 the chain carries Phosphotyrosine. Serine 1136 is subject to Phosphoserine. Residues 1151–1160 (PSDRTVKKED) are compositionally biased toward basic and acidic residues. 6 positions are modified to phosphoserine: serine 1161, serine 1164, serine 1181, serine 1200, serine 1201, and serine 1205. The segment covering 1198–1214 (NESSEAPSPVNAMNSFV) has biased composition (polar residues).

It belongs to the immunoglobulin superfamily. L1/neurofascin/NgCAM family. Constituent of a NFASC/NRCAM/ankyrin-G complex. Detected in a complex with CNTN1 and PTPRB. Interacts with MYOC. Interacts with GLDN. Detected in cerebellum Purkinje cells. Detected on nodes of Ranvier and unmyelinated axons in sciatic nerve (at protein level).

It localises to the cell membrane. The protein resides in the cell projection. The protein localises to the axon. Its subcellular location is the secreted. Its function is as follows. Cell adhesion protein that is required for normal responses to cell-cell contacts in brain and in the peripheral nervous system. Plays a role in neurite outgrowth in response to contactin binding. Plays a role in mediating cell-cell contacts between Schwann cells and axons. Plays a role in the formation and maintenance of the nodes of Ranvier on myelinated axons. Nodes of Ranvier contain clustered sodium channels that are crucial for the saltatory propagation of action potentials along myelinated axons. During development, nodes of Ranvier are formed by the fusion of two heminodes. Required for normal clustering of sodium channels at heminodes; not required for the formation of mature nodes with normal sodium channel clusters. Required, together with GLDN, for maintaining NFASC and sodium channel clusters at mature nodes of Ranvier. This chain is Neuronal cell adhesion molecule (Nrcam), found in Rattus norvegicus (Rat).